A 165-amino-acid polypeptide reads, in one-letter code: MTLEEFSAGEQKTERMDKVGDALEEVLSKALSQRTITVGVYEAAKLLNVDPDNVVLCLLAADEDDDRDVALQIHFTLIQAFCCENDIDILRVSNPGRLAELLLLETDAGPAASEGAEQPPDLHCVLVTNPHSSQWKDPALSQLICFCRESRYMDQWVPVINLPER.

Thr-2 bears the Phosphothreonine mark.

This sequence belongs to the GADD45 family. Interacts with AURKA, PCNA, GADD45GIP1 and MAPK14.

The protein localises to the nucleus. Functionally, might affect PCNA interaction with some CDK (cell division protein kinase) complexes; stimulates DNA excision repair in vitro and inhibits entry of cells into S phase. In T-cells, functions as a regulator of p38 MAPKs by inhibiting p88 phosphorylation and activity. This Bos taurus (Bovine) protein is Growth arrest and DNA damage-inducible protein GADD45 alpha (GADD45A).